The primary structure comprises 375 residues: Alcohol dehydrogenase 6 (375 aa).

Residues cysteine 47, histidine 69, cysteine 99, cysteine 102, cysteine 105, cysteine 113, and cysteine 175 each coordinate Zn(2+). NAD(+)-binding positions include glycine 200–glycine 205, aspartate 224, lysine 229, valine 293–serine 295, and arginine 370.

The protein belongs to the zinc-containing alcohol dehydrogenase family. Class-V subfamily. In terms of assembly, dimer. Zn(2+) serves as cofactor. Liver.

The protein resides in the cytoplasm. The enzyme catalyses a primary alcohol + NAD(+) = an aldehyde + NADH + H(+). It catalyses the reaction a secondary alcohol + NAD(+) = a ketone + NADH + H(+). Functionally, alcohol dehydrogenase. Catalyzes the NAD-dependent oxidation of primary alcohols to the corresponding aldehydes. Oxidizes secondary alcohols to the corresponding ketones. The sequence is that of Alcohol dehydrogenase 6 (ADH6) from Peromyscus maniculatus (North American deer mouse).